Consider the following 248-residue polypeptide: MRTAIIAGNWKMNKTVKEAVELVKELKPLVKDAKCDVVVCPTYVCLPAVLEEVKGSNIKVGAQNMHFEESGAYTGEIAPKMLEELGVHYVIIGHSERRQYFNETDETVNKKVKKAFEHNLIPIVCCGESLEEREGNITEKVLEGQIKVGLKELSKEQVEKLVIAYEPIWAIGTGKTATDEQANETIGYIRTVVKDMYGENVADKVRIQYGGSVKPGTIKAQMAKEEIDGALVGGASLKAEDFAAIINY.

Substrate is bound at residue 9-11 (NWK). The active-site Electrophile is His94. Glu166 acts as the Proton acceptor in catalysis. Substrate is bound by residues Gly172, Ser212, and 233–234 (GG).

It belongs to the triosephosphate isomerase family. Homodimer.

It localises to the cytoplasm. The enzyme catalyses D-glyceraldehyde 3-phosphate = dihydroxyacetone phosphate. It functions in the pathway carbohydrate biosynthesis; gluconeogenesis. The protein operates within carbohydrate degradation; glycolysis; D-glyceraldehyde 3-phosphate from glycerone phosphate: step 1/1. In terms of biological role, involved in the gluconeogenesis. Catalyzes stereospecifically the conversion of dihydroxyacetone phosphate (DHAP) to D-glyceraldehyde-3-phosphate (G3P). In Clostridium botulinum (strain Langeland / NCTC 10281 / Type F), this protein is Triosephosphate isomerase.